The primary structure comprises 417 residues: UDP-N-acetylglucosamine 1-carboxyvinyltransferase 2 (417 aa).

A phosphoenolpyruvate-binding site is contributed by 22–23 (KN). R94 serves as a coordination point for UDP-N-acetyl-alpha-D-glucosamine. C118 acts as the Proton donor in catalysis. C118 carries the 2-(S-cysteinyl)pyruvic acid O-phosphothioketal modification. UDP-N-acetyl-alpha-D-glucosamine-binding positions include 123-127 (RPIDL), D306, and I328.

This sequence belongs to the EPSP synthase family. MurA subfamily.

It localises to the cytoplasm. It carries out the reaction phosphoenolpyruvate + UDP-N-acetyl-alpha-D-glucosamine = UDP-N-acetyl-3-O-(1-carboxyvinyl)-alpha-D-glucosamine + phosphate. The protein operates within cell wall biogenesis; peptidoglycan biosynthesis. Its function is as follows. Cell wall formation. Adds enolpyruvyl to UDP-N-acetylglucosamine. This Clostridium tetani (strain Massachusetts / E88) protein is UDP-N-acetylglucosamine 1-carboxyvinyltransferase 2.